Consider the following 81-residue polypeptide: Sulfur carrier protein TusA (81 aa).

Cys20 functions as the Cysteine persulfide intermediate in the catalytic mechanism.

This sequence belongs to the sulfur carrier protein TusA family.

The protein resides in the cytoplasm. In terms of biological role, sulfur carrier protein which probably makes part of a sulfur-relay system. The chain is Sulfur carrier protein TusA from Colwellia psychrerythraea (strain 34H / ATCC BAA-681) (Vibrio psychroerythus).